Reading from the N-terminus, the 52-residue chain is Small, acid-soluble spore protein K (52 aa).

Residues 1-52 (MGKQAEFWSESKNNSKIDGQPKAKSRFASKRPNGTINTHPQERMRAANQQEE) are disordered.

It belongs to the SspK family.

Its subcellular location is the spore core. The chain is Small, acid-soluble spore protein K from Bacillus anthracis (strain A0248).